A 2877-amino-acid polypeptide reads, in one-letter code: MSCNGGSHPRINTLGRMTRAESGPDLRYEMTYSGGGGGGGGGGGGTSRMYYSRRCTVNDQNSDGYCQTGTMSRHQNQNTIQELLQNCADCLMRAELIAQPELKFGEGIQLAWNRELDEYFTQANDQMEIIDGLIREMRQMGQPCDAYQKRLLQLQEQMRALYKAISAPRVRRASSKGGYTCQSGSGWDEFTKRLTGECLGWMRQQRAEMDLMAWGVDSGSVEQHINSHRSIHNAIGDYRWQLDKIKADLREKSAIYQLEEEYENLLKASFERMDHLRQLQNIIQATSREIMWINDCEEEELLYDWSDKNTNIAQKQEAFSIRMSQLEVKEKELNKLKQESDQLVLNQHPASDKIEAYMDTLQTQWSWILQITKCIDVHLKENAAYFQFFEEAQSTEAYLKGLQDSIRKKYPCDKNMPLQHLLEQIKELEKEREKILEYKRQVQNLVNKSKKIVQLKPRNPDYRSNKPIILRALCDYKQDQKIVHKGDECILKDNNERSKWYVTGPGGVDMLVPSVGLIIPPPNPLAVDLSCKIEQYYEAILALWNQLYINMKSLVSWHYCMIDIEKIRAMTIAKLKTMRQEDYMKTIEDLELHYQDFIKNSQGSEMFGDDDKRRMQSQFTDAQKHYQTLVIQLPGHPQHQTVTKTEITHVGTCQDVNHNKVIETNRENDKQETWLLMELQKIRRQMEHCEARMTLKNLLLTDQGSTHNITVKINELKSVQNDSQALAEVLNQLKDMLANFRGSEKYCYLQNEIFGLFQKLENINGVTDGYLNSLCSVRALLQAILQTEDMLKVYEARLTEEETVCLDLDKVEAYRCGLKKIKNDLNLKKSLLATMKTELQKAQQIHSQSSQQYPLYDLDLGKFTEKVTQLTDRWQKIDKQIDFRLWDLEKQIKQLRNYRDNYQSFCKWLYDAKRRQDSLESMKFGDSNTVMRFLNEQKNLHNEISGKRDKSEEVHKIAELCANSIKDYELQLASYTSGLETLLNIPIKRTMVQSPSGVILQEAADIHARYIELLTRSGDYYRFLSEMLKSLEDLKLKNTKIEVLEEELRLARDANSENCNKNKFLDQNLQKYQAECSQFKAKLVSLEELKRQAELDGKSAKQNLDKCYGQIKELNEKITRLTYEIEDEKRRRKTVEDRFDQQKNDYDQLQKARQCEKESLGWQKLESEKAIKEKEYEIERLRVLLQEEGARKREYENELAKVRNHYNEEMSNLRNKYETEINITKTTIKEISMQKEDDSKNLRNQLDRLSRENRDLKDEIVRLNDSILQATEQRRRAEENALQQKACGSEIMQKKQHLEVELKQVIQQRSEDNARHKQSLEEAAKTIQDKNKEIERLKAEYQEEAKRRWEYENELSKVRNSYDEEIISLRNKFETEINITKTTIHQLTMQKEEDTSGYRAQIDNLTRENRSLSEEVKRLKNTLAQTTENLRRVEENVQQQKASGSEMSQRKQQLEIELRQVSQMRTEESMRYKQSLDDAAKTIQDKNKEIERLKQLVDKETNERKCLEDENSKLQRVQYDLQKANNSATEAMSKLKVQEQELTRLRIDYERVSQERTVKDQDITRIQSSLKDLQLQKQKAEEELSRLKRTASDESSKRKMLEEELEAMRRSLKEQAVKITNLTQQLEQASIVKKRSEDDLRQQRDVLDGHVREKQRTQEELRRLSLDVEALRRQLVQEQENVKQAHLRNEHFQKAIEDKSRSLNESKIEIERLQSLTENLTKEHLMLEEELRNLRLEYDDLRRGRSEADNDKNSTISELRSQLQISNNRTLELQGLINDLQRERENLRQEIEKFQKQALEASNRIQESKSQCTQVVQERESLLVKIKVLEQDKARLQRLEDELNRAKATLEAETRVKQRLECEKQQIQNDLNQWKTQYSRKEETIRKIESEREKSEREKNSLRSEIERLQAEIKRIEERCRRKLEDSTRETQSQLETERCRLQKEIDKLRQRPYGSHRETQTEYEWTVDSSKLVFDGLRKKVTAMQLYECQLIDKTTLDKLLKGKKSVEEVASEIQPFLRGAGAIAGASASPKEKYSLVEAKRKKFITPESTVMLLEAQAATGGIIDPHRNEKLTVDNAIARDLIDFDDRQQIYTAEKAITGFDDPFSGKTVSVSEAIKKNLIDRETGMRLLEAQLASGGVVDPVNSVFLPKDVALARGLIDRDLYRSLNDPRDSQKNFVDPITKKKVSYMQLRERCRIEPHTGLLLLSVQKRSMSFQGIRQPVTVTELVDSGILRPSTVNELESGQISYDEVGERIKDFLQGSSCIAGIYNETTKQKLGIYEAMKIGLVRPGTALELLEAQAATGFIVDPVSNLRLPVEEAYKRGLVGIEFKEKLLSAERAVTGYNDPETGNIISLFQAMNKELIEKGHGIRLLEAQIATGGIIDPKESHRLPVDMAYKRGYFNEELSEILSDPSDDTKGFFDPNTEENLTYLQLKERCIKDEETGLCLLPLKEKKKQVQTSQKNTLRKRRVVIVDPETNKEMSVQEAYKKGLIDYETFKELCEQECEWEEITITGSDGSTRVVLVDRKTGSQYDIQDAIDKGLVDRKFFDQYRSGSLSLTQFADMISLKNGVGTSSGLSGSVNDDVFSSSRHESVSKISTISSVRNLTIRSSSLSDPLEESSPIAAIFDTENLEKISITEGIERGIVDSITGQRLLEAQACTGGIIHPTTGQKLSLQDAVSQGLIDQDMATRLKPAQKAFIGFEGVKGKKKMSAAEAVKEKWLPYEAGQRFLEFQFLTGGLVDPEVHGRISTEEAIRKGFIDGRAAQRLQDISSYAKILTCPKTKLKISYKDAMNRSMVEDITGLRLLEAASVSSKGLPSPYNMSAPGSRSGSRSGSRSGSRSGSRSGSRRGSFDATGNSSYSYSYSFSSSSIGY.

The interval 1 to 20 (MSCNGGSHPRINTLGRMTRA) is disordered. The segment at 1–591 (MSCNGGSHPR…DYMKTIEDLE (591 aa)) is interaction with PKP1, JUP, PKP2. Positions 1–1063 (MSCNGGSHPR…ANSENCNKNK (1063 aa)) are globular 1. Serine 22 and serine 62 each carry phosphoserine. Tyrosine 65 carries the post-translational modification Phosphotyrosine. Threonine 70 bears the Phosphothreonine mark. A phosphoserine mark is found at serine 174, serine 175, and serine 183. Spectrin repeat units follow at residues 185 to 278 (SGWD…HLRQ) and 279 to 382 (LQNI…LKEN). The stretch at 383–453 (AAYFQFFEEA…NLVNKSKKIV (71 aa)) is one Spectrin 3a repeat. The region spanning 465-522 (NKPIILRALCDYKQDQKIVHKGDECILKDNNERSKWYVTGPGGVDMLVPSVGLIIPPP) is the SH3 domain. One copy of the Spectrin 3b repeat lies at 523 to 552 (NPLAVDLSCKIEQYYEAILALWNQLYINMK). 3 Spectrin repeats span residues 553 to 634 (SLVS…IQLP), 661 to 776 (VIET…SLCS), and 777 to 890 (VRAL…DLEK). 4 coiled-coil regions span residues 1034-1280 (LKLK…AEEN), 1313-1354 (NARH…YENE), 1395-1443 (TSGY…QKAS), and 1473-1926 (KQSL…KLED). The segment at 1064–1952 (FLDQNLQKYQ…QKEIDKLRQR (889 aa)) is central fibrous rod domain. Phosphoserine is present on residues serine 1665, serine 1715, and serine 2031. Residues 1953 to 2877 (PYGSHRETQT…YSFSSSSIGY (925 aa)) form a globular 2 region. The interval 1967 to 2215 (TVDSSKLVFD…LLLSVQKRSM (249 aa)) is 4.5 X 38 AA tandem repeats (Domain A). Plectin repeat units follow at residues 2016–2052 (QPFL…PEST), 2053–2090 (VMLL…FDDR), 2091–2128 (QQIY…RETG), 2129–2166 (MRLL…RDLY), 2170–2204 (NDPR…PHTG), 2205–2240 (LLLL…PSTV), 2258–2295 (KDFL…PGTA), 2296–2333 (LELL…IEFK), 2334–2371 (EKLL…KGHG), 2372–2409 (IRLL…EELS), 2413–2447 (SDPS…EETG), 2463–2500 (SQKN…YETF), 2514–2551 (TITG…RKFF), 2617–2654 (SDPL…SITG), 2655–2692 (QRLL…QDMA), 2731–2768 (QRFL…GRAA), and 2769–2806 (QRLQ…DITG). Phosphoserine is present on residues serine 2214, serine 2216, and serine 2232. Residues 2251-2453 (DEVGERIKDF…EETGLCLLPL (203 aa)) form a 4.5 X 38 AA tandem repeats (Domain B) region. Residues 2603–2628 (ISSVRNLTIRSSSLSDPLEESSPIAA) form an LRR 15 repeat. Residues 2616–2828 (LSDPLEESSP…GLPSPYNMSA (213 aa)) form a 4.5 X 38 AA tandem repeats (Domain C) region. 2 positions are modified to phosphoserine: serine 2817 and serine 2822. Residues 2817 to 2877 (SKGLPSPYNM…YSFSSSSIGY (61 aa)) are disordered. Phosphotyrosine is present on tyrosine 2824. Phosphoserine is present on residues serine 2827 and serine 2831. The segment at 2830 to 2853 (GSRSGSRSGSRSGSRSGSRSGSRR) is 6 X 4 AA tandem repeats of G-S-R-[SR]. Low complexity predominate over residues 2830–2853 (GSRSGSRSGSRSGSRSGSRSGSRR). An omega-N-methylarginine mark is found at arginine 2832 and arginine 2853. At serine 2855 the chain carries Phosphoserine. The residue at position 2859 (threonine 2859) is a Phosphothreonine. A compositionally biased stretch (low complexity) spans 2862 to 2877 (SSYSYSYSFSSSSIGY). Position 2874 is a phosphoserine (serine 2874).

Belongs to the plakin or cytolinker family. In terms of assembly, homodimer. Interacts with COL17A1 (via cytoplasmic region). Interacts with DSC2. Interacts with PKP1. Interacts with PKP2. Interacts weakly with TMEM65. Post-translationally, phosphorylation at Ser-2855 increases association with intermediate filament cytokeratin, potentially facilitating interaction between desmosome junctions and intermediate filament architecture. Expressed in cardiomyocytes (at protein level).

The protein localises to the cell junction. Its subcellular location is the desmosome. It is found in the cell membrane. The protein resides in the cytoplasm. Functionally, major high molecular weight protein of desmosomes. Regulates profibrotic gene expression in cardiomyocytes via activation of the MAPK14/p38 MAPK signaling cascade and increase in TGFB1 protein abundance. In Rattus norvegicus (Rat), this protein is Desmoplakin.